Consider the following 356-residue polypeptide: Stomatin-like protein 2, mitochondrial (356 aa).

The transit peptide at 1-28 (MLARAARGTGALLLKGSVQASARAPRRA) directs the protein to the mitochondrion. A Phosphoserine; by PKC/PRKCZ modification is found at Ser-17. Residue Tyr-124 is modified to Phosphotyrosine. At Lys-145 the chain carries N6-acetyllysine; alternate. Position 145 is an N6-succinyllysine; alternate (Lys-145). Positions 215-252 (INVAEGKKQAQILASEAEKAEQINQAAGEASAVLAKAK) form a coiled coil. Residue Lys-233 is modified to N6-acetyllysine. Residues 326–356 (EAQDSVSSRSSRDVRSTDASLDEELDRVKLS) are disordered. Residue Ser-330 is modified to Phosphoserine.

It belongs to the band 7/mec-2 family. In terms of assembly, forms homooligomers. Interacts with MFN2; may form heterooligomers with this mediator of mitochondrial fusion. Interacts with PHB1 and PHB2; stabilizes and recruits them to cardiolipin-enriched mitochondrial membranes. Interacts with CACNA2D2.

The protein localises to the cell membrane. It is found in the mitochondrion. Its subcellular location is the mitochondrion inner membrane. It localises to the mitochondrion intermembrane space. The protein resides in the membrane raft. The protein localises to the cytoplasm. It is found in the cytoskeleton. In terms of biological role, mitochondrial protein that probably regulates the biogenesis and the activity of mitochondria. Stimulates cardiolipin biosynthesis, binds cardiolipin-enriched membranes where it recruits and stabilizes some proteins including prohibitin and may therefore act in the organization of functional microdomains in mitochondrial membranes. Through regulation of the mitochondrial function may play a role into several biological processes including cell migration, cell proliferation, T-cell activation, calcium homeostasis and cellular response to stress. May play a role in calcium homeostasis through negative regulation of calcium efflux from mitochondria. Required for mitochondrial hyperfusion a pro-survival cellular response to stress which results in increased ATP production by mitochondria. May also regulate the organization of functional domains at the plasma membrane and play a role in T-cell activation through association with the T-cell receptor signaling complex and its regulation. In Bos taurus (Bovine), this protein is Stomatin-like protein 2, mitochondrial (STOML2).